Here is a 439-residue protein sequence, read N- to C-terminus: Hemagglutinin-esterase (439 aa).

The signal sequence occupies residues 1-22 (MGCMCIAMAPRTLLLLIGCQLV). The tract at residues 12-132 (TLLLLIGCQL…DNKRWMGNKA (121 aa)) is esterase domain 1. At 23–407 (FGFNEPLNIV…PVCIYDPLPV (385 aa)) the chain is on the virion surface side. The active-site Nucleophile is serine 45. A disulfide bridge connects residues cysteine 49 and cysteine 70. Residues asparagine 94, asparagine 152, asparagine 196, asparagine 246, asparagine 309, and asparagine 316 are each glycosylated (N-linked (GlcNAc...) asparagine; by host). Cysteine 118 and cysteine 167 are oxidised to a cystine. The receptor binding stretch occupies residues 133–281 (RFYARVYEKM…GNYKAVSLEY (149 aa)). 2 disulfides stabilise this stretch: cysteine 202/cysteine 291 and cysteine 210/cysteine 264. An esterase domain 2 region spans residues 282–395 (LLSLPSKAIC…HCPTAANIGY (114 aa)). Cysteine 322 and cysteine 327 are disulfide-bonded. Residue asparagine 331 is glycosylated (N-linked (GlcNAc...) asparagine; by host). Catalysis depends on charge relay system residues aspartate 342 and histidine 345. Asparagine 360 and asparagine 374 each carry an N-linked (GlcNAc...) asparagine; by host glycan. Cysteine 363 and cysteine 387 are oxidised to a cystine. The chain crosses the membrane as a helical span at residues 408–428 (ILLGVLLGIAVLIIVFLMFYF). Residues 429 to 439 (MTDSGVRLHEA) lie on the Intravirion side of the membrane.

Belongs to the influenza type C/coronaviruses hemagglutinin-esterase family. Homodimer; disulfide-linked. Forms a complex with the M protein in the pre-Golgi. Associates then with S-M complex to form a ternary complex S-M-HE. N-glycosylated in the host RER.

Its subcellular location is the virion membrane. The protein localises to the host cell membrane. It carries out the reaction N-acetyl-9-O-acetylneuraminate + H2O = N-acetylneuraminate + acetate + H(+). The enzyme catalyses N-acetyl-4-O-acetylneuraminate + H2O = N-acetylneuraminate + acetate + H(+). Functionally, structural protein that makes short spikes at the surface of the virus. Contains receptor binding and receptor-destroying activities. Mediates de-O-acetylation of N-acetyl-4-O-acetylneuraminic acid, which is probably the receptor determinant recognized by the virus on the surface of erythrocytes and susceptible cells. This receptor-destroying activity is important for virus release as it probably helps preventing self-aggregation and ensures the efficient spread of the progeny virus from cell to cell. May serve as a secondary viral attachment protein for initiating infection, the spike protein being the major one. May become a target for both the humoral and the cellular branches of the immune system. The protein is Hemagglutinin-esterase of Murine coronavirus (strain S) (MHV-S).